The sequence spans 170 residues: 3-hydroxyanthranilate 3,4-dioxygenase (170 aa).

O2 is bound at residue R44. Positions 48, 54, and 92 each coordinate Fe cation. A substrate-binding site is contributed by E54. Residues R96 and E106 each contribute to the substrate site. 4 residues coordinate a divalent metal cation: C121, C124, C158, and C161.

The protein belongs to the 3-HAO family. Fe(2+) serves as cofactor.

It is found in the cytoplasm. It carries out the reaction 3-hydroxyanthranilate + O2 = (2Z,4Z)-2-amino-3-carboxymuconate 6-semialdehyde. It functions in the pathway cofactor biosynthesis; NAD(+) biosynthesis; quinolinate from L-kynurenine: step 3/3. Functionally, catalyzes the oxidative ring opening of 3-hydroxyanthranilate to 2-amino-3-carboxymuconate semialdehyde, which spontaneously cyclizes to quinolinate. This chain is 3-hydroxyanthranilate 3,4-dioxygenase, found in Scheffersomyces stipitis (strain ATCC 58785 / CBS 6054 / NBRC 10063 / NRRL Y-11545) (Yeast).